The following is a 132-amino-acid chain: Transmembrane protein C1orf162 homolog (132 aa).

The chain crosses the membrane as a helical span at residues 36–56 (IILAFFAGVLLTLLIVALIFL). The segment at 95–132 (TFKPPEENSNDLTRNHSSGLEPTIYSQIKVTDSDLPLP) is disordered. Positions 104 to 124 (NDLTRNHSSGLEPTIYSQIKV) are enriched in polar residues. Position 111 is a phosphoserine (Ser-111).

The protein resides in the membrane. The protein is Transmembrane protein C1orf162 homolog of Mus musculus (Mouse).